The primary structure comprises 166 residues: Urease accessory protein UreE (166 aa).

Belongs to the UreE family.

The protein localises to the cytoplasm. In terms of biological role, involved in urease metallocenter assembly. Binds nickel. Probably functions as a nickel donor during metallocenter assembly. This chain is Urease accessory protein UreE, found in Pseudomonas savastanoi pv. phaseolicola (strain 1448A / Race 6) (Pseudomonas syringae pv. phaseolicola (strain 1448A / Race 6)).